The chain runs to 100 residues: Urease subunit gamma (100 aa).

It belongs to the urease gamma subunit family. Heterotrimer of UreA (gamma), UreB (beta) and UreC (alpha) subunits. Three heterotrimers associate to form the active enzyme.

Its subcellular location is the cytoplasm. It catalyses the reaction urea + 2 H2O + H(+) = hydrogencarbonate + 2 NH4(+). It functions in the pathway nitrogen metabolism; urea degradation; CO(2) and NH(3) from urea (urease route): step 1/1. This Magnetococcus marinus (strain ATCC BAA-1437 / JCM 17883 / MC-1) protein is Urease subunit gamma.